The chain runs to 89 residues: Small ribosomal subunit protein uS15 (89 aa).

The protein belongs to the universal ribosomal protein uS15 family. As to quaternary structure, part of the 30S ribosomal subunit. Forms a bridge to the 50S subunit in the 70S ribosome, contacting the 23S rRNA.

One of the primary rRNA binding proteins, it binds directly to 16S rRNA where it helps nucleate assembly of the platform of the 30S subunit by binding and bridging several RNA helices of the 16S rRNA. In terms of biological role, forms an intersubunit bridge (bridge B4) with the 23S rRNA of the 50S subunit in the ribosome. This is Small ribosomal subunit protein uS15 from Pseudomonas putida (strain ATCC 700007 / DSM 6899 / JCM 31910 / BCRC 17059 / LMG 24140 / F1).